The chain runs to 66 residues: Small vasohibin-binding protein (66 aa).

The segment covering 1–23 has biased composition (basic and acidic residues); sequence MDPPARKEKPKVKEPVSRIEKAK. The disordered stretch occupies residues 1 to 32; the sequence is MDPPARKEKPKVKEPVSRIEKAKQKSAQQELK. A coiled-coil region spans residues 5–52; that stretch reads ARKEKPKVKEPVSRIEKAKQKSAQQELKQRQRAEIYALNRVMTELEQQ.

This sequence belongs to the SVBP family. Interacts with VASH1 and VASH2.

The protein resides in the cytoplasm. It localises to the secreted. It is found in the cytoskeleton. Enhances the tyrosine carboxypeptidase activity of VASH1 and VASH2, thereby promoting the removal of the C-terminal tyrosine residue of alpha-tubulin. Also required to enhance the solubility and secretion of VASH1 and VASH2. Plays a role in axon and excitatory synapse formation. The polypeptide is Small vasohibin-binding protein (Bos taurus (Bovine)).